We begin with the raw amino-acid sequence, 333 residues long: Anthranilate phosphoribosyltransferase (333 aa).

5-phospho-alpha-D-ribose 1-diphosphate-binding positions include G81, 84 to 85, T89, 91 to 94, 109 to 117, and A121; these read GD, NIST, and KHGNRSVSS. G81 is a binding site for anthranilate. S93 provides a ligand contact to Mg(2+). Residue N112 coordinates anthranilate. R167 contacts anthranilate. 2 residues coordinate Mg(2+): D225 and E226.

This sequence belongs to the anthranilate phosphoribosyltransferase family. As to quaternary structure, homodimer. The cofactor is Mg(2+).

The catalysed reaction is N-(5-phospho-beta-D-ribosyl)anthranilate + diphosphate = 5-phospho-alpha-D-ribose 1-diphosphate + anthranilate. Its pathway is amino-acid biosynthesis; L-tryptophan biosynthesis; L-tryptophan from chorismate: step 2/5. Catalyzes the transfer of the phosphoribosyl group of 5-phosphorylribose-1-pyrophosphate (PRPP) to anthranilate to yield N-(5'-phosphoribosyl)-anthranilate (PRA). This is Anthranilate phosphoribosyltransferase from Actinobacillus succinogenes (strain ATCC 55618 / DSM 22257 / CCUG 43843 / 130Z).